We begin with the raw amino-acid sequence, 309 residues long: UDP-N-acetylenolpyruvoylglucosamine reductase (309 aa).

In terms of domain architecture, FAD-binding PCMH-type spans 34–199 (RVGGPAQVLF…TSARLRGTPA (166 aa)). R179 is a catalytic residue. Catalysis depends on S228, which acts as the Proton donor. The active site involves E298.

It belongs to the MurB family. The cofactor is FAD.

It localises to the cytoplasm. The enzyme catalyses UDP-N-acetyl-alpha-D-muramate + NADP(+) = UDP-N-acetyl-3-O-(1-carboxyvinyl)-alpha-D-glucosamine + NADPH + H(+). It participates in cell wall biogenesis; peptidoglycan biosynthesis. Its function is as follows. Cell wall formation. This Rhodopseudomonas palustris (strain ATCC BAA-98 / CGA009) protein is UDP-N-acetylenolpyruvoylglucosamine reductase.